The primary structure comprises 469 residues: Ribosomal protein uS12 methylthiotransferase RimO (469 aa).

The MTTase N-terminal domain occupies 3 to 119 (TRVYMHTLGC…VARIVSDAQA (117 aa)). Residues Cys-12, Cys-48, Cys-82, Cys-154, Cys-158, and Cys-161 each contribute to the [4Fe-4S] cluster site. Residues 140 to 370 (SLPSHTAYLK…MAVQQAISRA (231 aa)) enclose the Radical SAM core domain. The region spanning 373–441 (QAMIGRRVEV…EYDLVGRVVA (69 aa)) is the TRAM domain. The interval 444 to 469 (PSRAARPLPAAPRAAPARKGGLNVLR) is disordered. The segment covering 447–461 (AARPLPAAPRAAPAR) has biased composition (low complexity).

It belongs to the methylthiotransferase family. RimO subfamily. The cofactor is [4Fe-4S] cluster.

It is found in the cytoplasm. It catalyses the reaction L-aspartate(89)-[ribosomal protein uS12]-hydrogen + (sulfur carrier)-SH + AH2 + 2 S-adenosyl-L-methionine = 3-methylsulfanyl-L-aspartate(89)-[ribosomal protein uS12]-hydrogen + (sulfur carrier)-H + 5'-deoxyadenosine + L-methionine + A + S-adenosyl-L-homocysteine + 2 H(+). In terms of biological role, catalyzes the methylthiolation of an aspartic acid residue of ribosomal protein uS12. The protein is Ribosomal protein uS12 methylthiotransferase RimO of Anaeromyxobacter sp. (strain K).